The sequence spans 206 residues: N-(5'-phosphoribosyl)anthranilate isomerase (206 aa).

This sequence belongs to the TrpF family.

It carries out the reaction N-(5-phospho-beta-D-ribosyl)anthranilate = 1-(2-carboxyphenylamino)-1-deoxy-D-ribulose 5-phosphate. The protein operates within amino-acid biosynthesis; L-tryptophan biosynthesis; L-tryptophan from chorismate: step 3/5. In Pseudomonas putida (strain GB-1), this protein is N-(5'-phosphoribosyl)anthranilate isomerase.